A 546-amino-acid chain; its full sequence is Oncoprotein-induced transcript 3 protein (546 aa).

The signal sequence occupies residues 1–19; the sequence is MPLSLLLTCLSTTVTLVSP. N-linked (GlcNAc...) asparagine glycosylation is found at Asn89 and Asn116. Positions 182 to 222 constitute an EGF-like; calcium-binding domain; that stretch reads DENECEHNNGGCSEICVNLKNSHRCACGVGRVLRSDGKTCE. 3 disulfide bridges follow: Cys186–Cys197, Cys193–Cys206, and Cys208–Cys221. In terms of domain architecture, ZP spans 261-516; it reads TCQVPVLCKS…SRCAQGCHRR (256 aa). Asn299 carries an N-linked (GlcNAc...) asparagine glycan.

As to expression, liver-specific. Expressed only in the hepatocytes.

It localises to the nucleus envelope. In terms of biological role, may be involved in hepatocellular function and development. This is Oncoprotein-induced transcript 3 protein (Oit3) from Mus musculus (Mouse).